The sequence spans 122 residues: C-C motif chemokine 9 (122 aa).

Residues 1-21 form the signal peptide; it reads MKPFHTALSFLILTTALGIWA. 3 disulfide bridges follow: C57–C80, C58–C96, and C67–C107.

This sequence belongs to the intercrine beta (chemokine CC) family. Post-translationally, the N-terminal is proteolytically cleaved by proteases associated with inflammatory responses. The processed forms CCL9(29-101), CCL9(30-101) and CCL9(31-101) exhibit increase in CCR1-mediated signaling and chemotaxis assays in vitro. As to expression, expressed mainly in the liver, lung, and the thymus, although some expression has been detected in a wide variety of tissues except brain.

It localises to the secreted. Its function is as follows. Monokine with inflammatory, pyrogenic and chemokinetic properties. Circulates at high concentrations in the blood of healthy animals. Binding to a high-affinity receptor activates calcium release in neutrophils. It also inhibits colony formation of bone marrow myeloid immature progenitors. The protein is C-C motif chemokine 9 (Ccl9) of Mus musculus (Mouse).